The chain runs to 155 residues: Endoribonuclease YbeY (155 aa).

Zn(2+) is bound by residues His113, His117, and His123.

The protein belongs to the endoribonuclease YbeY family. Zn(2+) is required as a cofactor.

Its subcellular location is the cytoplasm. Functionally, single strand-specific metallo-endoribonuclease involved in late-stage 70S ribosome quality control and in maturation of the 3' terminus of the 16S rRNA. The protein is Endoribonuclease YbeY of Ureaplasma parvum serovar 3 (strain ATCC 27815 / 27 / NCTC 11736).